A 581-amino-acid polypeptide reads, in one-letter code: Zinc finger protein 319 (581 aa).

The span at 1-22 (MSESWQQPPQTQPQQPQAPQPQ) shows a compositional bias: low complexity. The segment at 1 to 39 (MSESWQQPPQTQPQQPQAPQPQHHAETPPALAEHTLPPG) is disordered. The C2H2-type 1 zinc finger occupies 75–99 (PKCGVCGHDLAHLSSPHEHQCLAGH). The C2H2-type 2; degenerate zinc finger occupies 103-125 (FQCTQCLKIFHQATDLLEHQCVQ). Residue lysine 129 forms a Glycyl lysine isopeptide (Lys-Gly) (interchain with G-Cter in SUMO2) linkage. 4 consecutive C2H2-type zinc fingers follow at residues 131 to 153 (FVCGVCKMGFSLLTSLAQHHSSH), 201 to 223 (YSCPVCQKPFKHLSELSRHERIH), 229 to 251 (YKCTLCDKSFSQSSHLVHHKRTH), and 257 to 279 (YKCAVCEKTFKHRSHLVRHMYAH). Serine 280 is modified (phosphoserine). The C2H2-type 7; degenerate zinc finger occupies 286 to 308 (FRCNVCELHFKESSELLQHPCTP). C2H2-type zinc fingers lie at residues 314–336 (FRCGECQKAFKRPSDLRQHERTH), 342–364 (FKCDLCPMGFKQQYALMRHRRTH), and 370–392 (FKCGLCEKGFGQPSHLLYHQHVH). The C2H2-type 11; degenerate zinc-finger motif lies at 398–420 (FKCPVCQKGFDQSAELLRHKCLP). The C2H2-type 12 zinc finger occupies 427–449 (FKCPVCNKAYKRASALQKHQLSH). The segment at 457 to 479 (LRCTLCERRFFSSSEFVQHRCDP) adopts a C2H2-type 13; degenerate zinc-finger fold. C2H2-type zinc fingers lie at residues 485–507 (LKCPDCEKRFKYASDLQRHRRVH), 513–535 (YKCPSCDKAFKQREHLNKHQGVH), and 541–563 (FKCVWCGERFLDVALLQEHSAQH).

This sequence belongs to the krueppel C2H2-type zinc-finger protein family.

The protein resides in the nucleus. May be involved in transcriptional regulation. In Mus musculus (Mouse), this protein is Zinc finger protein 319 (Znf319).